Here is a 438-residue protein sequence, read N- to C-terminus: Na(+)/H(+) antiporter NhaA (438 aa).

The next 11 membrane-spanning stretches (helical) occupy residues 23-43 (FGGI…NSFL), 62-82 (FFIG…LFFL), 104-124 (SFPV…YFFL), 133-153 (GFGI…MLLG), 162-182 (VFLI…IALF), 185-205 (TNLK…LAVL), 221-241 (VLLW…AVIL), 302-322 (FLAP…NAGV), 337-357 (LGVI…ITFI), 372-392 (WWHI…SMFI), and 410-430 (IAIL…LFAL).

It belongs to the NhaA Na(+)/H(+) (TC 2.A.33) antiporter family.

It is found in the cell inner membrane. It carries out the reaction Na(+)(in) + 2 H(+)(out) = Na(+)(out) + 2 H(+)(in). Its function is as follows. Na(+)/H(+) antiporter that extrudes sodium in exchange for external protons. The sequence is that of Na(+)/H(+) antiporter NhaA from Helicobacter pylori (strain ATCC 700392 / 26695) (Campylobacter pylori).